A 266-amino-acid polypeptide reads, in one-letter code: GTP cyclohydrolase MptA (266 aa).

This sequence belongs to the GTP cyclohydrolase IV family. As to quaternary structure, homodimer. The cofactor is Fe(2+).

It carries out the reaction GTP + H2O = 7,8-dihydroneopterin 2',3'-cyclic phosphate + formate + diphosphate + H(+). Its pathway is cofactor biosynthesis; 5,6,7,8-tetrahydromethanopterin biosynthesis. Functionally, converts GTP to 7,8-dihydro-D-neopterin 2',3'-cyclic phosphate, the first intermediate in the biosynthesis of coenzyme methanopterin. The protein is GTP cyclohydrolase MptA of Pyrococcus abyssi (strain GE5 / Orsay).